A 203-amino-acid chain; its full sequence is Glycerol-3-phosphate acyltransferase (203 aa).

A run of 6 helical transmembrane segments spans residues 1–21 (MPAWLSALLAALGGYLLGSIP), 52–72 (VGKGPALLVLLVDAAKGAAAV), 73–93 (ALGSALGSPWWVVVAALGAVI), 115–135 (ILLAMAWPVALATFGVWLLGI), 140–160 (IVSFSSLLAAVAAPLLMWALG), and 161–181 (QPLPYLLFALAGGVYVIAAHR).

Belongs to the PlsY family. Probably interacts with PlsX.

The protein resides in the cell inner membrane. The enzyme catalyses an acyl phosphate + sn-glycerol 3-phosphate = a 1-acyl-sn-glycero-3-phosphate + phosphate. It participates in lipid metabolism; phospholipid metabolism. Functionally, catalyzes the transfer of an acyl group from acyl-phosphate (acyl-PO(4)) to glycerol-3-phosphate (G3P) to form lysophosphatidic acid (LPA). This enzyme utilizes acyl-phosphate as fatty acyl donor, but not acyl-CoA or acyl-ACP. This is Glycerol-3-phosphate acyltransferase from Synechococcus sp. (strain JA-3-3Ab) (Cyanobacteria bacterium Yellowstone A-Prime).